Consider the following 533-residue polypeptide: Calcium-dependent protein kinase 19 (533 aa).

Composition is skewed to polar residues over residues 1–12 (MGSCCSRATSPD) and 24–38 (SHQT…SYNH). The disordered stretch occupies residues 1–53 (MGSCCSRATSPDSGRGGANGYGYSHQTKPAQTTPSYNHPQPPPPAEVRYTPSA). Gly2 carries the N-myristoyl glycine lipid modification. The Protein kinase domain maps to 85–343 (YSLGKELGRG…SAQVLQHPWL (259 aa)). ATP-binding positions include 91-99 (LGRGQFGVT) and Lys114. The Proton acceptor role is filled by Asp209. Residues 348–378 (ASDKPIDSAVLSRMKQFRAMNKLKKMALKVI) are autoinhibitory domain. EF-hand domains follow at residues 385-420 (EEIK…LGSK), 421-456 (LSEA…RHKL), 457-492 (ERDE…HEMG), and 497-527 (IKDI…GGMQ). The Ca(2+) site is built by Asp398, Asp400, Ser402, Thr404, Glu409, Asp434, Asp436, Asn438, Ser440, Glu445, Asp470, Asp472, Ser474, Glu481, Asp505, Asp507, Asp509, Arg511, and Glu516.

This sequence belongs to the protein kinase superfamily. Ser/Thr protein kinase family. CDPK subfamily. Expressed in root tips, leaf veins, mesophyll cells, flower reproductive organs and mature pollen grains.

Its subcellular location is the membrane. It catalyses the reaction L-seryl-[protein] + ATP = O-phospho-L-seryl-[protein] + ADP + H(+). It carries out the reaction L-threonyl-[protein] + ATP = O-phospho-L-threonyl-[protein] + ADP + H(+). Its activity is regulated as follows. Activated by calcium. Autophosphorylation may play an important role in the regulation of the kinase activity. In terms of biological role, may play a role in signal transduction pathways that involve calcium as a second messenger. This Oryza sativa subsp. japonica (Rice) protein is Calcium-dependent protein kinase 19.